The chain runs to 97 residues: DNA-directed RNA polymerase subunit omega (97 aa).

This sequence belongs to the RNA polymerase subunit omega family. The RNAP catalytic core consists of 2 alpha, 1 beta, 1 beta' and 1 omega subunit. When a sigma factor is associated with the core the holoenzyme is formed, which can initiate transcription.

The catalysed reaction is RNA(n) + a ribonucleoside 5'-triphosphate = RNA(n+1) + diphosphate. Promotes RNA polymerase assembly. Latches the N- and C-terminal regions of the beta' subunit thereby facilitating its interaction with the beta and alpha subunits. The chain is DNA-directed RNA polymerase subunit omega from Coxiella burnetii (strain CbuK_Q154) (Coxiella burnetii (strain Q154)).